Here is a 445-residue protein sequence, read N- to C-terminus: 3-phosphoshikimate 1-carboxyvinyltransferase (445 aa).

The disordered stretch occupies residues 1 to 25 (MSGHGPAQPMTARRSGPLKGRAEIP). Positions 28, 29, and 33 each coordinate 3-phosphoshikimate. K28 contributes to the phosphoenolpyruvate binding site. Phosphoenolpyruvate-binding residues include G101 and R129. 3-phosphoshikimate is bound by residues S174, Q176, D326, and K353. Residue Q176 participates in phosphoenolpyruvate binding. The Proton acceptor role is filled by D326. Residues R357 and R400 each contribute to the phosphoenolpyruvate site.

This sequence belongs to the EPSP synthase family. Monomer.

Its subcellular location is the cytoplasm. The enzyme catalyses 3-phosphoshikimate + phosphoenolpyruvate = 5-O-(1-carboxyvinyl)-3-phosphoshikimate + phosphate. It functions in the pathway metabolic intermediate biosynthesis; chorismate biosynthesis; chorismate from D-erythrose 4-phosphate and phosphoenolpyruvate: step 6/7. Catalyzes the transfer of the enolpyruvyl moiety of phosphoenolpyruvate (PEP) to the 5-hydroxyl of shikimate-3-phosphate (S3P) to produce enolpyruvyl shikimate-3-phosphate and inorganic phosphate. This Cereibacter sphaeroides (strain ATCC 17029 / ATH 2.4.9) (Rhodobacter sphaeroides) protein is 3-phosphoshikimate 1-carboxyvinyltransferase.